A 247-amino-acid chain; its full sequence is ATP synthase subunit a, chloroplastic (247 aa).

The next 5 membrane-spanning stretches (helical) occupy residues 38 to 58 (QVLI…ALAV), 95 to 115 (VPFI…GALL), 134 to 154 (INTT…AGLA), 199 to 219 (LVVV…VMFL), and 220 to 240 (GLFT…AYIG).

This sequence belongs to the ATPase A chain family. F-type ATPases have 2 components, CF(1) - the catalytic core - and CF(0) - the membrane proton channel. CF(1) has five subunits: alpha(3), beta(3), gamma(1), delta(1), epsilon(1). CF(0) has four main subunits: a, b, b' and c.

Its subcellular location is the plastid. It localises to the chloroplast thylakoid membrane. Key component of the proton channel; it plays a direct role in the translocation of protons across the membrane. This is ATP synthase subunit a, chloroplastic from Trachelium caeruleum (Blue throatwort).